A 590-amino-acid polypeptide reads, in one-letter code: L-erythrulose kinase (590 aa).

The region spanning Q7 to F331 is the DhaK domain. H217 (tele-hemiaminal-histidine intermediate) is an active-site residue. A DhaL domain is found at H366–A568. ADP is bound by residues H398 to G401, T441 to S442, G483, R540, and D553 to G555.

It carries out the reaction L-erythrulose + ATP = L-erythrulose 1-phosphate + ADP + H(+). Its pathway is carbohydrate metabolism. Involved in catabolism of D-apiose. Catalyzes the phosphorylation of L-erythrulose to L-erythrulose 1-phosphate. Can also phosphorylate D-erythrulose and dihydroxyacetone in vitro. The polypeptide is L-erythrulose kinase (Pectobacterium atrosepticum (strain SCRI 1043 / ATCC BAA-672) (Erwinia carotovora subsp. atroseptica)).